A 142-amino-acid polypeptide reads, in one-letter code: Large ribosomal subunit protein uL13 (142 aa).

The protein belongs to the universal ribosomal protein uL13 family. In terms of assembly, part of the 50S ribosomal subunit.

In terms of biological role, this protein is one of the early assembly proteins of the 50S ribosomal subunit, although it is not seen to bind rRNA by itself. It is important during the early stages of 50S assembly. This chain is Large ribosomal subunit protein uL13, found in Aeromonas salmonicida (strain A449).